The primary structure comprises 102 residues: Transcription factor UPBEAT1 (102 aa).

The bHLH domain occupies 32–82 (IRPRKSVEASRRPCRAIHRRVKTLKELVPNTKTSEGLDGLFRQTADYILAL).

Homodimer. Expressed in the root vascular tissue and in root hairs and lateral root caps. Detected at the protein level in all cell files in the elongation zone.

It is found in the nucleus. Functionally, transcription factor that modulates the balance between cellular proliferation and differentiation in root growth. Does not act through cytokinin and auxin signaling, but by repressing peroxidase expression in the elongation zone. The polypeptide is Transcription factor UPBEAT1 (UPB1) (Arabidopsis thaliana (Mouse-ear cress)).